A 164-amino-acid polypeptide reads, in one-letter code: Reticulon-like protein B22 (164 aa).

The Reticulon domain occupies 1–164 (MGEMGKAMGL…ILEQEAHSDT (164 aa)). 2 helical membrane-spanning segments follow: residues 30-50 (SLFS…GLLF) and 117-137 (LISG…SMLC).

The protein resides in the endoplasmic reticulum membrane. In Arabidopsis thaliana (Mouse-ear cress), this protein is Reticulon-like protein B22 (RTNLB22).